We begin with the raw amino-acid sequence, 339 residues long: Glycerol-3-phosphate dehydrogenase [NAD(P)+] (339 aa).

NADPH contacts are provided by Ser-15, Tyr-16, His-36, and Lys-110. Sn-glycerol 3-phosphate contacts are provided by Lys-110, Gly-139, and Thr-141. Ala-143 is an NADPH binding site. Residues Lys-195, Asp-248, Ser-258, Arg-259, and Asn-260 each contribute to the sn-glycerol 3-phosphate site. The active-site Proton acceptor is Lys-195. NADPH is bound at residue Arg-259. 2 residues coordinate NADPH: Val-283 and Glu-285.

The protein belongs to the NAD-dependent glycerol-3-phosphate dehydrogenase family.

It localises to the cytoplasm. The enzyme catalyses sn-glycerol 3-phosphate + NAD(+) = dihydroxyacetone phosphate + NADH + H(+). It carries out the reaction sn-glycerol 3-phosphate + NADP(+) = dihydroxyacetone phosphate + NADPH + H(+). Its pathway is membrane lipid metabolism; glycerophospholipid metabolism. Catalyzes the reduction of the glycolytic intermediate dihydroxyacetone phosphate (DHAP) to sn-glycerol 3-phosphate (G3P), the key precursor for phospholipid synthesis. In Citrobacter koseri (strain ATCC BAA-895 / CDC 4225-83 / SGSC4696), this protein is Glycerol-3-phosphate dehydrogenase [NAD(P)+].